Reading from the N-terminus, the 653-residue chain is Phospholipid-transporting ATPase VD (653 aa).

The Cytoplasmic segment spans residues 1–375 (MACNLCYEAE…GHWCYTRLSN (375 aa)). Residues Glu14, Phe56, Lys80, Arg124, Thr204, Gly205, Asp206, 259 to 266 (GLIITGKT), Arg293, and Lys299 contribute to the ATP site. Asp319 contributes to the Mg(2+) binding site. Residues Asn322 and Asp323 each contribute to the ATP site. Residue Asp323 participates in Mg(2+) binding. Residues 376 to 396 (MILYFFYKNVAYVNLLFWYQF) form a helical membrane-spanning segment. Topologically, residues 397–407 (FCGFSGTSMTD) are exoplasmic loop. A helical membrane pass occupies residues 408-428 (YWVLIFFNLLFTSAPPVIYGV). The Cytoplasmic portion of the chain corresponds to 429-458 (LEKDVSAETLMQLPELYKSGQKSEAYLPHT). The chain crosses the membrane as a helical span at residues 459-480 (FWITLLDAFYQSLVCFFVPYFT). At 481 to 487 (YQGSDID) the chain is on the exoplasmic loop side. Residues 488–510 (IFAFGNPLNTAALFIILLHLIIE) form a helical membrane-spanning segment. The Cytoplasmic portion of the chain corresponds to 511 to 516 (SKSLTW). The helical transmembrane segment at 517-537 (IHMLVITGSILSYFLFAIVFG) threads the bilayer. The Exoplasmic loop portion of the chain corresponds to 538–555 (AMCVTCNPPSNPYWIMQE). The helical transmembrane segment at 556-580 (HVLDPVFYLVCILTTCIALLPRFVY) threads the bilayer. Over 581–653 (RGAGKMNQVT…AFEMARPCKD (73 aa)) the chain is Cytoplasmic.

It belongs to the cation transport ATPase (P-type) (TC 3.A.3) family. Type IV subfamily. In terms of assembly, component of a P4-ATPase flippase complex which consists of a catalytic alpha subunit ATP10A and an accessory beta subunit TMEM30A. Mg(2+) is required as a cofactor. Post-translationally, autophosphorylated at the conserved aspartate of the P-type ATPase signature sequence.

It is found in the cell membrane. It localises to the endoplasmic reticulum membrane. The enzyme catalyses ATP + H2O + phospholipidSide 1 = ADP + phosphate + phospholipidSide 2.. It catalyses the reaction a beta-D-glucosyl-(1&lt;-&gt;1')-N-acylsphing-4-enine(out) + ATP + H2O = a beta-D-glucosyl-(1&lt;-&gt;1')-N-acylsphing-4-enine(in) + ADP + phosphate + H(+). Catalytic component of a P4-ATPase flippase complex, which catalyzes the hydrolysis of ATP coupled to the transport of glucosylceramide (GlcCer) from the outer to the inner leaflet of the plasma membrane. The polypeptide is Phospholipid-transporting ATPase VD (ATP10D) (Macaca fascicularis (Crab-eating macaque)).